A 424-amino-acid polypeptide reads, in one-letter code: Glutamyl-tRNA reductase (424 aa).

Residues 51 to 54 (TCNR), Ser99, 104 to 106 (EDQ), and Gln110 each bind substrate. The active-site Nucleophile is the Cys52. 179-184 (GGGEMG) serves as a coordination point for NADP(+).

Belongs to the glutamyl-tRNA reductase family. As to quaternary structure, homodimer.

The enzyme catalyses (S)-4-amino-5-oxopentanoate + tRNA(Glu) + NADP(+) = L-glutamyl-tRNA(Glu) + NADPH + H(+). The protein operates within porphyrin-containing compound metabolism; protoporphyrin-IX biosynthesis; 5-aminolevulinate from L-glutamyl-tRNA(Glu): step 1/2. Its function is as follows. Catalyzes the NADPH-dependent reduction of glutamyl-tRNA(Glu) to glutamate 1-semialdehyde (GSA). This is Glutamyl-tRNA reductase from Methanocorpusculum labreanum (strain ATCC 43576 / DSM 4855 / Z).